The primary structure comprises 328 residues: Phosphate acyltransferase (328 aa).

Belongs to the PlsX family. In terms of assembly, homodimer. Probably interacts with PlsY.

It localises to the cytoplasm. The catalysed reaction is a fatty acyl-[ACP] + phosphate = an acyl phosphate + holo-[ACP]. The protein operates within lipid metabolism; phospholipid metabolism. Its function is as follows. Catalyzes the reversible formation of acyl-phosphate (acyl-PO(4)) from acyl-[acyl-carrier-protein] (acyl-ACP). This enzyme utilizes acyl-ACP as fatty acyl donor, but not acyl-CoA. The polypeptide is Phosphate acyltransferase (Campylobacter jejuni subsp. jejuni serotype O:2 (strain ATCC 700819 / NCTC 11168)).